A 749-amino-acid chain; its full sequence is Catalase-peroxidase 2 (749 aa).

The first 27 residues, methionine 1–alanine 27, serve as a signal peptide directing secretion. The segment at residues tryptophan 107–tyrosine 229 is a cross-link (tryptophyl-tyrosyl-methioninium (Trp-Tyr) (with M-255)). Histidine 108 functions as the Proton acceptor in the catalytic mechanism. The tryptophyl-tyrosyl-methioninium (Tyr-Met) (with W-107) cross-link spans tyrosine 229–methionine 255. Histidine 270 contacts heme b.

The protein belongs to the peroxidase family. Peroxidase/catalase subfamily. Homodimer or homotetramer. It depends on heme b as a cofactor. Post-translationally, formation of the three residue Trp-Tyr-Met cross-link is important for the catalase, but not the peroxidase activity of the enzyme.

It carries out the reaction H2O2 + AH2 = A + 2 H2O. The catalysed reaction is 2 H2O2 = O2 + 2 H2O. In terms of biological role, bifunctional enzyme with both catalase and broad-spectrum peroxidase activity. This Legionella pneumophila (strain Paris) protein is Catalase-peroxidase 2.